The sequence spans 376 residues: Homocitrate synthase (376 aa).

In terms of domain architecture, Pyruvate carboxyltransferase spans 4 to 259; sequence WKIIDSTLRE…RRKYKLEMLP (256 aa). Arg12 lines the 2-oxoglutarate pocket. Glu13 is a binding site for Mg(2+). A 2-oxoglutarate-binding site is contributed by His72. Asp92 contributes to the L-lysine binding site. Arg133 lines the 2-oxoglutarate pocket. L-lysine-binding residues include Ser135 and Thr166. Thr166 is a 2-oxoglutarate binding site. Residues His195 and His197 each contribute to the Mg(2+) site. His292 acts as the Proton acceptor in catalysis.

The protein belongs to the alpha-IPM synthase/homocitrate synthase family. Homocitrate synthase LYS20/LYS21 subfamily. In terms of assembly, exists in an equilibrium between monomer and homodimer. It depends on Mg(2+) as a cofactor. Mn(2+) is required as a cofactor.

It is found in the cytoplasm. The catalysed reaction is acetyl-CoA + 2-oxoglutarate + H2O = (2R)-homocitrate + CoA + H(+). The enzyme catalyses oxaloacetate + acetyl-CoA + H2O = citrate + CoA + H(+). It participates in amino-acid biosynthesis; L-lysine biosynthesis via AAA pathway; L-alpha-aminoadipate from 2-oxoglutarate: step 1/5. With respect to regulation, is highly and competitively inhibited by lysine that binds to the active site and competes with 2-oxoglutarate. Is also slightly inhibited by arginine and 2-aminoethylcysteine. Its function is as follows. Catalyzes the aldol-type condensation of 2-oxoglutarate with acetyl-CoA to yield homocitrate. Carries out the first step of the alpha-aminoadipate (AAA) lysine biosynthesis pathway. To a lesser extent, can also use oxaloacetate in place of 2-oxoglutarate, leading to citrate. Does not display 2-isopropylmalate synthase activity since it cannot use 2-oxoisovalerate. The chain is Homocitrate synthase from Thermus thermophilus (strain ATCC BAA-163 / DSM 7039 / HB27).